The following is a 151-amino-acid chain: Endoribonuclease YbeY (151 aa).

Zn(2+)-binding residues include His117, His121, and His127.

Belongs to the endoribonuclease YbeY family. Requires Zn(2+) as cofactor.

The protein localises to the cytoplasm. In terms of biological role, single strand-specific metallo-endoribonuclease involved in late-stage 70S ribosome quality control and in maturation of the 3' terminus of the 16S rRNA. This Alkaliphilus oremlandii (strain OhILAs) (Clostridium oremlandii (strain OhILAs)) protein is Endoribonuclease YbeY.